A 272-amino-acid chain; its full sequence is Orotidine 5'-phosphate decarboxylase (272 aa).

Lys96 acts as the Proton donor in catalysis.

Belongs to the OMP decarboxylase family. Type 2 subfamily.

The enzyme catalyses orotidine 5'-phosphate + H(+) = UMP + CO2. The protein operates within pyrimidine metabolism; UMP biosynthesis via de novo pathway; UMP from orotate: step 2/2. This Phocaeicola vulgatus (strain ATCC 8482 / DSM 1447 / JCM 5826 / CCUG 4940 / NBRC 14291 / NCTC 11154) (Bacteroides vulgatus) protein is Orotidine 5'-phosphate decarboxylase.